Reading from the N-terminus, the 71-residue chain is Small ribosomal subunit protein bS18 (71 aa).

It belongs to the bacterial ribosomal protein bS18 family. As to quaternary structure, part of the 30S ribosomal subunit. Forms a tight heterodimer with protein bS6.

Functionally, binds as a heterodimer with protein bS6 to the central domain of the 16S rRNA, where it helps stabilize the platform of the 30S subunit. In Synechococcus elongatus (strain ATCC 33912 / PCC 7942 / FACHB-805) (Anacystis nidulans R2), this protein is Small ribosomal subunit protein bS18.